We begin with the raw amino-acid sequence, 317 residues long: Pantothenate kinase (317 aa).

Residue 95-102 coordinates ATP; it reads GSVAVGKS.

Belongs to the prokaryotic pantothenate kinase family.

The protein resides in the cytoplasm. The catalysed reaction is (R)-pantothenate + ATP = (R)-4'-phosphopantothenate + ADP + H(+). The protein operates within cofactor biosynthesis; coenzyme A biosynthesis; CoA from (R)-pantothenate: step 1/5. The polypeptide is Pantothenate kinase (Rhodopseudomonas palustris (strain BisB18)).